The following is a 463-amino-acid chain: MELEKKEILVSEFEREETMTTTNKLKFIIPSIVGLFLFLIPLNYGGKWTIGVGILAETAQGITADYLPAFMVAVLLLSVVLTIAANVAKPQWIMNSAFLKGLFHVSGFWLVMRAAGALFAVMVIFEIGPAFIWDAYTGGTVLYELVPVLTKWFLFAGLLMPLLLEFGLMDFIGTSLRKVMRPLFRLPGRSSIDAVASWMGSGTVGVLITTKQYEEGFYTKREAAVIATNFSVASIAFSLVVISFIGLDYMFIPFYLTVIVAGLIAAIICPRIPPLSRKADTYYEGAGKQISEEVPEGKTSRQWALERAVATASKVKSVKGVATKGFQNVLDIWFGLIPLVMALGTIALIVAEYTSIFTYLSYPFVPILELLRIPEAQAAAPALLVGFADMFLPAVVGSGIESELTRFVIAAVSMTQLIYMSEIGILLLRSKIPLSLLDLVIVFFQRTIITLPIIVFMAHVFFF.

This is an uncharacterized protein from Alkalihalophilus pseudofirmus (strain ATCC BAA-2126 / JCM 17055 / OF4) (Bacillus pseudofirmus).